A 113-amino-acid polypeptide reads, in one-letter code: Protein CTLA-2-beta (113 aa).

Tandem repeats lie at residues 15–17 (EWK) and 18–20 (EWK). Positions 15 to 20 (EWKEWK) are 2 X 3 AA tandem repeats of E-W-K.

This sequence to the propeptide regions of cysteine proteases.

Its function is as follows. Not known, expressed in activated T-cell. The chain is Protein CTLA-2-beta (Ctla2b) from Mus musculus (Mouse).